We begin with the raw amino-acid sequence, 307 residues long: MTSKLEQLKQYTTVVADTGDFDAIARLKPVDATTNPSLLLKAAALPRYAEHLRQATAGSGGDAGLACDRFAVAVGKDILGVIPGRISTEVDARLSFDSEATLARAHRLIELYDEQGIDRERVLIKIASTWEGIRAAEILEREGIQTNLTLLFSFAQAVACADAGVFLISPFVGRIYDWYKKSENRDYAGAEDPGVQSVSRIYRYYKANGYKTVVMGASFRNLGQIEQLAGCDRLTISPDLLQQLADAQGELPRLLLPGEGEPRQVLDESAFRWQMNEDAMATEKLAEGIRLFARDQEKLEYQLATRH.

Residue lysine 125 is the Schiff-base intermediate with substrate of the active site.

This sequence belongs to the transaldolase family. Type 1 subfamily.

The protein resides in the cytoplasm. It carries out the reaction D-sedoheptulose 7-phosphate + D-glyceraldehyde 3-phosphate = D-erythrose 4-phosphate + beta-D-fructose 6-phosphate. The protein operates within carbohydrate degradation; pentose phosphate pathway; D-glyceraldehyde 3-phosphate and beta-D-fructose 6-phosphate from D-ribose 5-phosphate and D-xylulose 5-phosphate (non-oxidative stage): step 2/3. Transaldolase is important for the balance of metabolites in the pentose-phosphate pathway. This is Transaldolase from Pseudomonas aeruginosa (strain ATCC 15692 / DSM 22644 / CIP 104116 / JCM 14847 / LMG 12228 / 1C / PRS 101 / PAO1).